Consider the following 108-residue polypeptide: UPF0145 protein gll1048 (108 aa).

It belongs to the UPF0145 family.

The protein is UPF0145 protein gll1048 of Gloeobacter violaceus (strain ATCC 29082 / PCC 7421).